A 1034-amino-acid polypeptide reads, in one-letter code: Potassium-transporting ATPase alpha chain 1 (1034 aa).

Residues 2–97 (GKAENYELYQ…NALRPPRGTP (96 aa)) lie on the Cytoplasmic side of the membrane. Phosphotyrosine occurs at positions 7 and 10. Residues 13–40 (ELGPGPSGDMAAKMSKKKAGRGGGKRKE) are disordered. The segment covering 26–39 (MSKKKAGRGGGKRK) has biased composition (basic residues). A Phosphoserine; by PKA and PKC modification is found at Ser27. Residues 98 to 118 (EYVKFARQLAGGLQCLMWVAA) form a helical membrane-spanning segment. Over 119–141 (AICLIAFAIQASEGDLTTDDNLY) the chain is Lumenal. A helical transmembrane segment spans residues 142 to 162 (LALALIAVVVVTGCFGYYQEF). Residues 163–298 (KSTNIIASFK…NEKTPIAIEI (136 aa)) lie on the Cytoplasmic side of the membrane. A disordered region spans residues 222–244 (KVDNSSLTGESEPQTRSPECTHE). Polar residues predominate over residues 225–239 (NSSLTGESEPQTRSP). A helical transmembrane segment spans residues 299–318 (EHFVDIIAGLAILFGATFFI). The Lumenal segment spans residues 319–330 (VAMCIGYTFLRA). A helical membrane pass occupies residues 331-348 (MVFFMAIVVAYVPEGLLA). K(+) is bound by residues Val339, Ala340, Val342, and Glu344. Over 349 to 782 (TVTVCLSLTA…EQGRLIFDNL (434 aa)) the chain is Cytoplasmic. The active-site 4-aspartylphosphate intermediate is Asp386. Mg(2+) is bound by residues Asp386 and Thr388. Phosphoserine occurs at positions 462 and 600. Residues Asp727 and Asp731 each contribute to the Mg(2+) site. Residues 783-802 (KKSIAYTLTKNIPELTPYLI) traverse the membrane as a helical segment. A K(+)-binding site is contributed by Glu796. At 803–812 (YITVSVPLPL) the chain is on the lumenal side. A helical transmembrane segment spans residues 813-833 (GCITILFIELCTDIFPSVSLA). Glu821 contacts K(+). The Cytoplasmic segment spans residues 834–853 (YEKAESDIMHLRPRNPKRDR). Ser839 bears the Phosphoserine mark. The helical transmembrane segment at 854–876 (LVNEPLAAYSYFQIGAIQSFAGF) threads the bilayer. Residues 877 to 928 (TDYFTAMAQEGWFPLLCVGLRPQWENHHLQDLQDSYGQEWTFGQRLYQQYTC) are Lumenal-facing. A helical transmembrane segment spans residues 929–948 (YTVFFISIEMCQIADVLIRK). Over 949–962 (TRRLSAFQQGFFRN) the chain is Cytoplasmic. Residue Ser953 is modified to Phosphoserine; by PKA. Residues 963–981 (RILVIAIVFQVCIGCFLCY) traverse the membrane as a helical segment. Over 982-996 (CPGMPNIFNFMPIRF) the chain is Lumenal. The chain crosses the membrane as a helical span at residues 997-1017 (QWWLVPMPFGLLIFVYDEIRK). The Cytoplasmic portion of the chain corresponds to 1018-1034 (LGVRCCPGSWWDQELYY).

It belongs to the cation transport ATPase (P-type) (TC 3.A.3) family. Type IIC subfamily. As to quaternary structure, the gastric H(+)/K(+) ATPase pump is composed of the catalytic alpha subunit ATP4A and the regulatory beta subunit ATP4B. Interacts (via the P-domain) with ATP4B (via N-terminus); this interaction stabilizes the lumenal-open E2 conformation state and prevents the reverse reaction of the transport cycle.

It localises to the apical cell membrane. The protein localises to the cell membrane. The catalysed reaction is K(+)(out) + ATP + H2O + H(+)(in) = K(+)(in) + ADP + phosphate + 2 H(+)(out). Its activity is regulated as follows. Down-regulated by K(+)-competitive acid blockers (P-CABs) such as vonoprazan. The catalytic subunit of the gastric H(+)/K(+) ATPase pump which transports H(+) ions in exchange for K(+) ions across the apical membrane of parietal cells. Uses ATP as an energy source to pump H(+) ions to the gastric lumen while transporting K(+) ion from the lumen into the cell. Remarkably generates a million-fold proton gradient across the gastric parietal cell membrane, acidifying the gastric juice down to pH 1. Within a transport cycle, the transfer of a H(+) ion across the membrane is coupled to ATP hydrolysis and is associated with a transient phosphorylation that shifts the pump conformation from inward-facing (E1) to outward-facing state (E2). The release of the H(+) ion in the stomach lumen is followed by binding of K(+) ion converting the pump conformation back to the E1 state. This chain is Potassium-transporting ATPase alpha chain 1 (ATP4A), found in Sus scrofa (Pig).